A 330-amino-acid chain; its full sequence is tRNA U34 carboxymethyltransferase (330 aa).

Carboxy-S-adenosyl-L-methionine-binding positions include Lys91, Trp105, Lys110, Gly130, 152 to 154, 181 to 182, Met196, Tyr200, and Arg315; these read DPS and IE.

This sequence belongs to the class I-like SAM-binding methyltransferase superfamily. CmoB family. Homotetramer.

The enzyme catalyses carboxy-S-adenosyl-L-methionine + 5-hydroxyuridine(34) in tRNA = 5-carboxymethoxyuridine(34) in tRNA + S-adenosyl-L-homocysteine + H(+). Catalyzes carboxymethyl transfer from carboxy-S-adenosyl-L-methionine (Cx-SAM) to 5-hydroxyuridine (ho5U) to form 5-carboxymethoxyuridine (cmo5U) at position 34 in tRNAs. This chain is tRNA U34 carboxymethyltransferase, found in Shewanella amazonensis (strain ATCC BAA-1098 / SB2B).